Reading from the N-terminus, the 254-residue chain is Alcohol dehydrogenase (254 aa).

Position 10–33 (10–33) interacts with NAD(+); the sequence is FVAGLGGIGLDTSREIVKSGPKNL. Ser138 contacts substrate. The Proton acceptor role is filled by Tyr151.

The protein belongs to the short-chain dehydrogenases/reductases (SDR) family. As to quaternary structure, homodimer.

It carries out the reaction a primary alcohol + NAD(+) = an aldehyde + NADH + H(+). It catalyses the reaction a secondary alcohol + NAD(+) = a ketone + NADH + H(+). The protein is Alcohol dehydrogenase (Adh) of Drosophila grimshawi (Hawaiian fruit fly).